Here is a 283-residue protein sequence, read N- to C-terminus: Shikimate dehydrogenase (NADP(+)) (283 aa).

Residues 16–18 (SLS) and T63 each bind shikimate. The active-site Proton acceptor is K67. D79 provides a ligand contact to NADP(+). Shikimate is bound by residues N88 and D103. NADP(+) contacts are provided by residues 128-132 (GAGGA), A223, and G243.

This sequence belongs to the shikimate dehydrogenase family. In terms of assembly, homodimer.

It carries out the reaction shikimate + NADP(+) = 3-dehydroshikimate + NADPH + H(+). It participates in metabolic intermediate biosynthesis; chorismate biosynthesis; chorismate from D-erythrose 4-phosphate and phosphoenolpyruvate: step 4/7. Its function is as follows. Involved in the biosynthesis of the chorismate, which leads to the biosynthesis of aromatic amino acids. Catalyzes the reversible NADPH linked reduction of 3-dehydroshikimate (DHSA) to yield shikimate (SA). This Xanthomonas oryzae pv. oryzae (strain MAFF 311018) protein is Shikimate dehydrogenase (NADP(+)).